Here is a 556-residue protein sequence, read N- to C-terminus: Secreted lipase 4 (556 aa).

An N-terminal signal peptide occupies residues 1 to 21 (MKLLTNIGTLLALSPVQQVSA). N-linked (GlcNAc...) asparagine glycans are attached at residues asparagine 46, asparagine 263, asparagine 305, asparagine 411, and asparagine 453.

Belongs to the type-B carboxylesterase/lipase family.

Its subcellular location is the secreted. It catalyses the reaction a carboxylic ester + H2O = an alcohol + a carboxylate + H(+). In terms of biological role, secreted lipase involved in plant virulence. Has a substrate preference for p-nitrophenyl esters with a carbon chain length of C12 (p-nitrophenyl laureate). The sequence is that of Secreted lipase 4 from Gibberella zeae (strain ATCC MYA-4620 / CBS 123657 / FGSC 9075 / NRRL 31084 / PH-1) (Wheat head blight fungus).